An 84-amino-acid polypeptide reads, in one-letter code: Toxin Cll9 (84 aa).

A signal peptide spans 1–19; the sequence is MNSLLMITACLILIGTVWA. Residues 20–83 form the LCN-type CS-alpha/beta domain; it reads EDGYLFDKRK…ISRTPGKTCK (64 aa). 4 disulfides stabilise this stretch: C31-C82, C35-C58, C44-C63, and C48-C65.

As to expression, expressed by the venom gland.

The protein resides in the secreted. Its function is as follows. Beta toxins bind voltage-independently at site-4 of sodium channels (Nav) and shift the voltage of activation toward more negative potentials thereby affecting sodium channel activation and promoting spontaneous and repetitive firing. Has some action on peripheral ganglia, but not on other sodium channels such as those from cerebellum granular cells in culture. Induces sleep, suggesting a strong antiepileptic action. This is Toxin Cll9 from Centruroides limpidus (Mexican scorpion).